Here is a 417-residue protein sequence, read N- to C-terminus: Serine/threonine-protein kinase SBK1 (417 aa).

Residues 53–318 form the Protein kinase domain; that stretch reads YELVRELGKG…VFRFLKHELT (266 aa). ATP contacts are provided by residues 59-67 and Lys-82; that span reads LGKGTYGKV. Residue Asp-174 is the Proton acceptor of the active site. A disordered region spans residues 321–405; that stretch reads LRRRPSHRAR…TDGRTDKSKG (85 aa). Residues 363–382 are compositionally biased toward pro residues; the sequence is PSPPSVGPVVPVPVPVPVPV.

This sequence belongs to the protein kinase superfamily. Ser/Thr protein kinase family.

The protein resides in the cytoplasm. It carries out the reaction L-seryl-[protein] + ATP = O-phospho-L-seryl-[protein] + ADP + H(+). It catalyses the reaction L-threonyl-[protein] + ATP = O-phospho-L-threonyl-[protein] + ADP + H(+). Its function is as follows. May be involved in signal-transduction pathways related to the control of brain development. This chain is Serine/threonine-protein kinase SBK1 (Sbk1), found in Mus musculus (Mouse).